A 127-amino-acid chain; its full sequence is Large ribosomal subunit protein eL24 (127 aa).

A disordered region spans residues 93 to 127; it reads KRAQKPEVKQAAAEQAKREIKEKKKAAAKKAAPKK. The segment covering 115 to 127 has biased composition (basic residues); sequence KKKAAAKKAAPKK.

Belongs to the eukaryotic ribosomal protein eL24 family.

This chain is Large ribosomal subunit protein eL24 (rpl24), found in Dictyostelium discoideum (Social amoeba).